A 495-amino-acid chain; its full sequence is UPF0371 protein CE2832 (495 aa).

Belongs to the UPF0371 family.

In Corynebacterium efficiens (strain DSM 44549 / YS-314 / AJ 12310 / JCM 11189 / NBRC 100395), this protein is UPF0371 protein CE2832.